The chain runs to 325 residues: Hydroxymethylglutaryl-CoA lyase, mitochondrial (325 aa).

The N-terminal 27 residues, Met1–Gly27, are a transit peptide targeting the mitochondrion. Positions Val33–Leu300 constitute a Pyruvate carboxyltransferase domain. Arg41 contributes to the substrate binding site. A divalent metal cation is bound at residue Asp42. Residue Lys48 is modified to N6-acetyllysine; alternate. At Lys48 the chain carries N6-succinyllysine; alternate. An N6-acetyllysine modification is found at Lys111. Residues Lys137 and Lys179 each carry the N6-acetyllysine; alternate modification. 2 positions are modified to N6-succinyllysine; alternate: Lys137 and Lys179. His233 and His235 together coordinate a divalent metal cation. Cys266 is a catalytic residue. Residue Asn275 coordinates a divalent metal cation. The short motif at Cys323–Leu325 is the Microbody targeting signal element. Lys324 is subject to N6-acetyllysine.

The protein belongs to the HMG-CoA lyase family. As to quaternary structure, homodimer; disulfide-linked. Can also form homotetramers. Requires a divalent metal cation as cofactor. As to expression, highest expression in liver. Expressed in pancreas, kidney, intestine, testis, fibroblasts and lymphoblasts. Very low expression in brain and skeletal muscle. The relative expression of isoform 2 (at mRNA level) is highest in heart (30%), skeletal muscle (22%), and brain (14%).

It localises to the mitochondrion matrix. It is found in the peroxisome. It carries out the reaction (3S)-3-hydroxy-3-methylglutaryl-CoA = acetoacetate + acetyl-CoA. Its pathway is metabolic intermediate metabolism; (S)-3-hydroxy-3-methylglutaryl-CoA degradation; acetoacetate from (S)-3-hydroxy-3-methylglutaryl-CoA: step 1/1. Stimulated by reducing agents such as dithiothreitol (DTT). Mitochondrial 3-hydroxy-3-methylglutaryl-CoA lyase that catalyzes a cation-dependent cleavage of (S)-3-hydroxy-3-methylglutaryl-CoA into acetyl-CoA and acetoacetate, a key step in ketogenesis. Terminal step in leucine catabolism. Ketone bodies (beta-hydroxybutyrate, acetoacetate and acetone) are essential as an alternative source of energy to glucose, as lipid precursors and as regulators of metabolism. In Homo sapiens (Human), this protein is Hydroxymethylglutaryl-CoA lyase, mitochondrial (HMGCL).